A 203-amino-acid polypeptide reads, in one-letter code: MELKQSLSVHLEAEKPLRRYGAVEETAWKAEGLGSQLDIISMAETSMMPEEIELEMAKIQRLREVLVRRESELRFMMDDIQLCKDIMNLKQELQNLVAIPEKEKTKLQKQREDELIQKIHRLVQKRDFLVDDAEVERLREQEEDKEMADFLRIKLKPLDKVTKSSASSRAEKKAEPPPSKPTVAKTGLALIKDCCGATQCNIM.

A bMERB domain is found at 3–149; the sequence is LKQSLSVHLE…EQEEDKEMAD (147 aa). A disordered region spans residues 160 to 186; that stretch reads KVTKSSASSRAEKKAEPPPSKPTVAKT.

This chain is bMERB domain-containing protein 1 (Bmerb1), found in Rattus norvegicus (Rat).